The following is a 427-amino-acid chain: Probable anaerobic glycerol-3-phosphate dehydrogenase subunit B (427 aa).

This sequence belongs to the anaerobic G-3-P dehydrogenase subunit B family. Requires FMN as cofactor.

It catalyses the reaction a quinone + sn-glycerol 3-phosphate = dihydroxyacetone phosphate + a quinol. It participates in polyol metabolism; glycerol degradation via glycerol kinase pathway; glycerone phosphate from sn-glycerol 3-phosphate (anaerobic route): step 1/1. The chain is Probable anaerobic glycerol-3-phosphate dehydrogenase subunit B from Halobacterium salinarum (strain ATCC 29341 / DSM 671 / R1).